The chain runs to 383 residues: Chitinase-3-like protein 1 (383 aa).

The N-terminal stretch at 1–21 (MGVKASQTGFVVLVLLQCCSA) is a signal peptide. The 362-residue stretch at 22-383 (YKLVCYYTSW…NAIKDALAAT (362 aa)) folds into the GH18 domain. Cysteine 26 and cysteine 51 are oxidised to a cystine. A glycan (N-linked (GlcNAc...) asparagine) is linked at asparagine 60. Chitin-binding positions include 70-71 (EW), 97-100 (GGWN), tyrosine 141, 204-207 (MTYD), and arginine 263. An intrachain disulfide couples cysteine 300 to cysteine 364. The segment at 324–338 (QWVGYDDQESVKSKV) is important for AKT1 activation and IL8 production. Tryptophan 352 lines the chitin pocket.

The protein belongs to the glycosyl hydrolase 18 family. As to quaternary structure, monomer. In terms of processing, glycosylated. In terms of tissue distribution, present in activated macrophages, articular chondrocytes, synovial cells as well as in liver. Very low or undetectable expression in non-inflammatory colon. Undetectable in muscle tissues, lung, pancreas, mononuclear cells, or fibroblasts.

Its subcellular location is the secreted. The protein resides in the extracellular space. It localises to the cytoplasm. The protein localises to the perinuclear region. It is found in the endoplasmic reticulum. Carbohydrate-binding lectin with a preference for chitin. Has no chitinase activity. May play a role in tissue remodeling and in the capacity of cells to respond to and cope with changes in their environment. Plays a role in T-helper cell type 2 (Th2) inflammatory response and IL-13-induced inflammation, regulating allergen sensitization, inflammatory cell apoptosis, dendritic cell accumulation and M2 macrophage differentiation. Facilitates invasion of pathogenic enteric bacteria into colonic mucosa and lymphoid organs. Mediates activation of AKT1 signaling pathway and subsequent IL8 production in colonic epithelial cells. Regulates antibacterial responses in lung by contributing to macrophage bacterial killing, controlling bacterial dissemination and augmenting host tolerance. Also regulates hyperoxia-induced injury, inflammation and epithelial apoptosis in lung. In Homo sapiens (Human), this protein is Chitinase-3-like protein 1 (CHI3L1).